A 1199-amino-acid chain; its full sequence is Putative pyruvate-flavodoxin oxidoreductase (1199 aa).

4Fe-4S ferredoxin-type domains follow at residues 681–710 and 737–766; these read EIPV…GKVY and FTIQ…QPRL. Residues C690, C693, C696, C700, C746, C749, C752, C756, C820, C823, C848, and C1079 each contribute to the [4Fe-4S] cluster site.

This sequence belongs to the pyruvate:ferredoxin/flavodoxin oxidoreductase family. [4Fe-4S] cluster is required as a cofactor.

The catalysed reaction is oxidized [flavodoxin] + pyruvate + CoA + 2 H(+) = reduced [flavodoxin] + acetyl-CoA + CO2. Oxidoreductase required for the transfer of electrons from pyruvate to flavodoxin. In Synechocystis sp. (strain ATCC 27184 / PCC 6803 / Kazusa), this protein is Putative pyruvate-flavodoxin oxidoreductase (nifJ).